The primary structure comprises 1714 residues: Collagen alpha-1(XXIV) chain (1714 aa).

An N-terminal signal peptide occupies residues 1–35 (MHLRAHRTRRGKVSPTAKTKSLLHFIVLCVAGVVV). Positions 141-217 (KLVVHIRGKQ…MNNNSIHFEG (77 aa)) constitute a Laminin G-like domain. Asparagine 155, asparagine 321, and asparagine 376 each carry an N-linked (GlcNAc...) asparagine glycan. Collagen-like domains follow at residues 487–542 (LRGP…PGFS), 552–611 (GDQG…EGNP), 660–719 (GPAG…KGEQ), 741–797 (GPPG…RGPP), 798–857 (GPPG…TGPV), 858–887 (GLPGEVGMTGSIGEKGERGSPGPLGPQGEK), 888–947 (GVMG…KGEK), 948–1007 (GDQG…PGEM), 1011–1052 (GPPG…PGAP), 1053–1112 (GEEG…PGQR), 1116–1170 (GKKG…GIPG), 1172–1196 (RGHQGQPGPSGLPGPKGEKGYPGED), 1201–1249 (GPPG…GEPG), 1252–1306 (GEQG…GNPG), 1309–1353 (GPPG…QGPK), 1354–1413 (GEQG…EGDA), and 1420–1479 (GPKG…PGPR). The tract at residues 487–1481 (LRGPKGDTGP…PPGAPGPRKQ (995 aa)) is disordered. Positions 496–505 (PPGPPGPAGI) are enriched in pro residues. Low complexity-rich tracts occupy residues 574-587 (HPGLPGLPGEQGIP) and 685-701 (SVGPVGPIGPAGIPGPM). Over residues 893–902 (PGPPGVPGPI) the composition is skewed to pro residues. A compositionally biased stretch (low complexity) spans 985–1019 (DRGLPGEPGLRGLQGDVGPPGEMGMEGPPGTEGES). 2 stretches are compositionally biased toward gly residues: residues 1035–1044 (GSVGGTGEPG) and 1065–1074 (GVPGGRGLPG). Low complexity-rich tracts occupy residues 1132 to 1145 (SRGPPGKIGKSGPK) and 1174 to 1186 (HQGQPGPSGLPGP). The segment covering 1256-1266 (LKGERGSEGNK) has biased composition (basic and acidic residues). The span at 1271–1293 (APGPSGKPGIPGLQGLLGPKGIQ) shows a compositional bias: low complexity. A compositionally biased stretch (gly residues) spans 1318–1327 (GIRGGPGRTG). Residues 1466 to 1476 (QPGPPGPPGAP) are compositionally biased toward pro residues. Positions 1515-1714 (EEIFKTLNYL…YIDSSSVCFL (200 aa)) constitute a Fibrillar collagen NC1 domain.

This sequence belongs to the fibrillar collagen family.

Its subcellular location is the secreted. It localises to the extracellular space. The protein resides in the extracellular matrix. In terms of biological role, may participate in regulating type I collagen fibrillogenesis at specific anatomical locations during fetal development. This is Collagen alpha-1(XXIV) chain (COL24A1) from Homo sapiens (Human).